The primary structure comprises 95 residues: Cobalt transport protein CbiN (95 aa).

2 helical membrane-spanning segments follow: residues 5–25 (HIILLAIVAIIIALPLIIYAG) and 67–87 (LLFALQAAIGAIIIGYYIGYY).

It belongs to the CbiN family. As to quaternary structure, forms an energy-coupling factor (ECF) transporter complex composed of an ATP-binding protein (A component, CbiO), a transmembrane protein (T component, CbiQ) and 2 possible substrate-capture proteins (S components, CbiM and CbiN) of unknown stoichimetry.

It localises to the cell membrane. The protein operates within cofactor biosynthesis; adenosylcobalamin biosynthesis. In terms of biological role, part of the energy-coupling factor (ECF) transporter complex CbiMNOQ involved in cobalt import. The chain is Cobalt transport protein CbiN from Methanocaldococcus jannaschii (strain ATCC 43067 / DSM 2661 / JAL-1 / JCM 10045 / NBRC 100440) (Methanococcus jannaschii).